Reading from the N-terminus, the 150-residue chain is Large ribosomal subunit protein bL9 (150 aa).

It belongs to the bacterial ribosomal protein bL9 family.

Its function is as follows. Binds to the 23S rRNA. In Polynucleobacter necessarius subsp. necessarius (strain STIR1), this protein is Large ribosomal subunit protein bL9.